The primary structure comprises 385 residues: 3,5,7-trioxododecanoyl-CoA synthase (385 aa).

The active site involves cysteine 157.

Belongs to the thiolase-like superfamily. Chalcone/stilbene synthases family. As to expression, expressed in bracts, flowers and young leaves. Not detected in mature leaves, roots and stems. Expressed in glandular trichomes.

The enzyme catalyses hexanoyl-CoA + 3 malonyl-CoA + 3 H(+) = 3,5,7-trioxododecanoyl-CoA + 3 CO2 + 3 CoA. It carries out the reaction 3,5,7-trioxododecanoyl-CoA = olivetol + CO2 + CoA. The protein operates within secondary metabolite biosynthesis; terpenoid biosynthesis. Its function is as follows. Involved in the biosynthesis of cannabinoids-related terpenophenolic natural products, which have pharmacological activity. Polyketide synthase responsible for olivetol biosynthesis, from a C(12)-polyketide, probably 3,5,7-trioxododecanoyl-CoA. Catalyzes the first step in the cannabinoids biosynthetic pathway. The preferred substrate is hexanoyl-CoA, but also accepts CoA esters with C4 to C8 aliphatic side chains. When using malonyl-CoA and hexanoyl-CoA as substrates, produces undetermined compounds distinct form olivetol or olivetolic acid that could be hexanoyl triacetic acid lactone (HTAL) and pentyl diacetic acid lactone (PDAL). Produces olivetolic acid when acting in concert with olivetolic acid cyclase (OAC). The sequence is that of 3,5,7-trioxododecanoyl-CoA synthase from Cannabis sativa (Hemp).